The chain runs to 410 residues: MGILSDDVVIISQSEKEGDPSVITINCPDKTGLGCDLCRILLFFGLNIVRGDVSTDGKWCYLVFWVIGKPNTRWNLLKMRLVEASPSFSWAFGISRCYLSDSESQPPKLPDLFLLKLACSDRTGLLYDVTEVLYKLEINIEKVKISTTPDGKVMDLFFVTDTRELLGTVKRRNEVYEYLRDAIGDSMISYDIELVGPEITACSTSSSVAETLFSSDVSGEHSSGLHTSSNVSIAVDNSLSSAHTLIHITCQDHKGLLYDIMRTFKDFNIQISYGRFTIKLGKNCEIDLFIVQSDGRKILDSSKLNALITRLRAELQQPLRVVMMNRGPDTELLVTNPVELSGKGRPQVFHDIALALKKIDTCIFSAEIGRHVTGDREWEVYKVLINEEDSLPIPRSKIEEEVWKTLMGWE.

ACT domains follow at residues 22–105 (VITI…SESQ), 114–197 (LLKL…LVGP), and 245–324 (LIHI…VVMM).

Functionally, may bind amino acids. The sequence is that of ACT domain-containing protein ACR10 from Arabidopsis thaliana (Mouse-ear cress).